We begin with the raw amino-acid sequence, 193 residues long: Calcium-binding protein E63-1 (193 aa).

EF-hand domains lie at 35-70 (VEIKDLRTAFDLLDRNRDGRVTANELQFMLKNLGIN), 71-106 (VSDELIHDLIREASHSGNGLINEAEFLQWVGRIQAL), 127-162 (DVTEDLIAAFRVFDRDGNGFITRDELQTAMEMIGEP), and 163-193 (LNEQQLEQLLVIADLDQDGRINYEEFTRLLL). Aspartate 48, asparagine 50, aspartate 52, arginine 54, and glutamate 59 together coordinate Ca(2+). Positions 140, 142, 144, 151, 176, 178, 180, 182, and 187 each coordinate Ca(2+).

This is Calcium-binding protein E63-1 (Eip63F-1) from Drosophila melanogaster (Fruit fly).